A 152-amino-acid chain; its full sequence is D-aminoacyl-tRNA deacylase (152 aa).

The short motif at 142–143 (GP) is the Gly-cisPro motif, important for rejection of L-amino acids element.

Belongs to the DTD family. In terms of assembly, homodimer.

Its subcellular location is the cytoplasm. It catalyses the reaction glycyl-tRNA(Ala) + H2O = tRNA(Ala) + glycine + H(+). The catalysed reaction is a D-aminoacyl-tRNA + H2O = a tRNA + a D-alpha-amino acid + H(+). Functionally, an aminoacyl-tRNA editing enzyme that deacylates mischarged D-aminoacyl-tRNAs. Also deacylates mischarged glycyl-tRNA(Ala), protecting cells against glycine mischarging by AlaRS. Acts via tRNA-based rather than protein-based catalysis; rejects L-amino acids rather than detecting D-amino acids in the active site. By recycling D-aminoacyl-tRNA to D-amino acids and free tRNA molecules, this enzyme counteracts the toxicity associated with the formation of D-aminoacyl-tRNA entities in vivo and helps enforce protein L-homochirality. In Paraburkholderia xenovorans (strain LB400), this protein is D-aminoacyl-tRNA deacylase.